Consider the following 210-residue polypeptide: T-cell surface glycoprotein CD8 beta chain (210 aa).

The first 21 residues, Met1–Val21, serve as a signal peptide directing secretion. Residues Leu22–Leu132 form the Ig-like V-type domain. Over Leu22 to Pro170 the chain is Extracellular. Cys41 and Cys116 are disulfide-bonded. Residue Asn102 is glycosylated (N-linked (GlcNAc...) asparagine). The helical transmembrane segment at Ile171–Ile191 threads the bilayer. At His192–Lys210 the chain is on the cytoplasmic side. Tyr209 carries the post-translational modification Phosphotyrosine.

Forms disulfide-linked heterodimers with CD8A at the cell surface. Interacts with CD3D; this interaction couples TCR-CD3 with CD8. Interacts with LCK. In terms of processing, phosphorylated as a consequence of T-cell activation. Post-translationally, palmitoylated at the cytoplasmic tail and thereby targets the heterodimer CD8A/CD8B to lipid rafts unlike CD8A homodimers. In terms of tissue distribution, isoform 1, isoform 3, isoform 5, isoform 6, isoform 7 and isoform 8 are expressed in both thymus and peripheral CD8+ T-cells. Expression of isoform 1 is higher in thymus CD8+ T-cells than in peripheral CD8+ T-cells. Expression of isoform 6 is higher in peripheral CD8+ T-cells than in thymus CD8+ T-cells.

Its subcellular location is the cell membrane. The protein localises to the secreted. Functionally, integral membrane glycoprotein that plays an essential role in the immune response and serves multiple functions in responses against both external and internal offenses. In T-cells, functions primarily as a coreceptor for MHC class I molecule:peptide complex. The antigens presented by class I peptides are derived from cytosolic proteins while class II derived from extracellular proteins. Interacts simultaneously with the T-cell receptor (TCR) and the MHC class I proteins presented by antigen presenting cells (APCs). In turn, recruits the Src kinase LCK to the vicinity of the TCR-CD3 complex. A palmitoylation site in the cytoplasmic tail of CD8B chain contributes to partitioning of CD8 into the plasma membrane lipid rafts where signaling proteins are enriched. Once LCK recruited, it initiates different intracellular signaling pathways by phosphorylating various substrates ultimately leading to lymphokine production, motility, adhesion and activation of cytotoxic T-lymphocytes (CTLs). Additionally, plays a critical role in thymic selection of CD8+ T-cells. In Homo sapiens (Human), this protein is T-cell surface glycoprotein CD8 beta chain (CD8B).